Consider the following 133-residue polypeptide: Small ribosomal subunit protein uS9 (133 aa).

Residues 98–113 (RKPLKTEGHLSRDPRA) are compositionally biased toward basic and acidic residues. The disordered stretch occupies residues 98–133 (RKPLKTEGHLSRDPRAKERRKYGLKKARKAPQFSKR). Basic residues predominate over residues 114–133 (KERRKYGLKKARKAPQFSKR).

Belongs to the universal ribosomal protein uS9 family.

The chain is Small ribosomal subunit protein uS9 from Synechococcus sp. (strain CC9902).